A 186-amino-acid polypeptide reads, in one-letter code: Ran guanine nucleotide release factor (186 aa).

Residues 27–70 (DLRPVPDNQEVFCHPVTDQSLIVELLELQAHVRGEAAARYHFED) form an interaction with RAN region.

The protein belongs to the MOG1 family. In terms of assembly, monomer. Interacts with RAN, both RAN-GTP and RAN-GDP. Competes with RCC1 for a common binding site on RAN and thereby inhibits RCC1-mediated nucleotide exchange. Forms a complex with RAN-GTP and RANBP1. Interacts with the cytoplasmic loop 2 of SCN5A. Isoform 1 and isoform 2 are ubiquitously expressed. Detected in heart and brain.

The protein localises to the nucleus. Its subcellular location is the cytoplasm. The protein resides in the perinuclear region. It localises to the cell membrane. May regulate the intracellular trafficking of RAN. Promotes guanine nucleotide release from RAN and inhibits binding of new GTP by preventing the binding of the RAN guanine nucleotide exchange factor RCC1. Regulates the levels of GTP-bound RAN in the nucleus, and thereby plays a role in the regulation of RAN-dependent mitotic spindle dynamics. Enhances the expression of SCN5A at the cell membrane in cardiomyocytes. This is Ran guanine nucleotide release factor (RANGRF) from Homo sapiens (Human).